The following is a 443-amino-acid chain: MSEMTPREIVSELDKHIIGQDNAKRSVAIALRNRWRRMQLNEELRHEVTPKNILMIGPTGVGKTEIARRLAKLANAPFIKVEATKFTEVGYVGKEVDSIIRDLTDAAVKMVRVQAIEKNRYRAEELAEERILDVLIPPAKNNWGQTEQQQEPSAARQAFRKKLREGQLDDKEIEIDLAAAPMGVEIMAPPGMEEMTSQLQSMFQNLGGQKQKARKLKIKDAMKLLIEEEAAKLVNPEELKQDAIDAVEQHGIVFIDEIDKICKRGESSGPDVSREGVQRDLLPLVEGCTVSTKHGMVKTDHILFIASGAFQIAKPSDLIPELQGRLPIRVELQALTTSDFERILTEPNASITVQYKALMATEGVNIEFTESGIKRIAEAAWQVNESTENIGARRLHTVLERLMEEISYDASDLSGQSITIDADYVSKHLDALVADEDLSRFIL.

ATP contacts are provided by residues Ile-18, 60–65 (GVGKTE), Asp-256, Glu-321, and Arg-393.

The protein belongs to the ClpX chaperone family. HslU subfamily. A double ring-shaped homohexamer of HslV is capped on each side by a ring-shaped HslU homohexamer. The assembly of the HslU/HslV complex is dependent on binding of ATP.

It localises to the cytoplasm. Functionally, ATPase subunit of a proteasome-like degradation complex; this subunit has chaperone activity. The binding of ATP and its subsequent hydrolysis by HslU are essential for unfolding of protein substrates subsequently hydrolyzed by HslV. HslU recognizes the N-terminal part of its protein substrates and unfolds these before they are guided to HslV for hydrolysis. This is ATP-dependent protease ATPase subunit HslU from Escherichia fergusonii (strain ATCC 35469 / DSM 13698 / CCUG 18766 / IAM 14443 / JCM 21226 / LMG 7866 / NBRC 102419 / NCTC 12128 / CDC 0568-73).